A 142-amino-acid polypeptide reads, in one-letter code: Large ribosomal subunit protein uL23 (142 aa).

The protein belongs to the universal ribosomal protein uL23 family.

Functionally, this protein binds to a specific region on the 26S rRNA. The chain is Large ribosomal subunit protein uL23 (RPL25) from Cyberlindnera jadinii (Torula yeast).